The sequence spans 982 residues: METKGYHSLPEGLDMERRWGQVSQAVEHSSLGSTERTDENNYMEIVNVSCVSGAIPNNSTQGSSKEKHELLPCLQQDNNRPGILTSDIKTELESKELSATVAESMGLYMDSVRDADYYEQQNQQRSMSPAKIYQNVEQLVKFYKENGHRPSTLSCVNRPLRSFMSDSVSSVNGGVMRAIVKSPIMCHEKSPSVCSPLNMTSSVCSPAGINSVSSTTASFGSFPVHSPITQGTPLTCSPNVENRGSRSHSPAHASNVGSPLSSPLSSMKSSISSPPSHCSVKSPVSSPNNVTPRSSVSSPANINNSRCSVSSPSNTNNRSTLSSPAASTVGSICSPVNNAFSYTASGTSAGSSTSRDVVPSPDTQEKGAQEVPFPKTEEVESAISNGVTGQLNIVQYIKPEPDGAFSSSCLGGNSKINSDSPFSVPIKQESTKHSCSGTSFKGNPTVNPFPFMDGSYFSFMDDKDYYSLSGILGPPVPGFDGTCEGSGFPVGIKQEPDDGSYYPEASIPSSAIVGVNSGGQSFHYRIGAQGTISLSRSARDQSFQHLSSFPPVNTLVESWKSHGDLSSRRSDGYPVLEYIPENVSSSTLRSVSTGSSRPSKICLVCGDEASGCHYGVVTCGSCKVFFKRAVEGQHNYLCAGRNDCIIDKIRRKNCPACRLQKCLQAGMNLGARRSKKLGKLKGIHEEQPQQQPPPPPPPPQSPEEGTTYIAPAKEPSVNTALVPQLSAISRALTPSPAMVLENIEPEVVYAGYDNSKPDTAENLLSTLNRLAGKQMIQVVKWAKVLPGFKNLPLEDQITLIQYSWMCLSSFALSWRSYKHTNSQFLYFAPDLVFNEEKMHQSAMYELCQGMHQISLQFIRLQLTFEEYTIMKVLLLLSTVPKDGLKSQAAFEEMRTNYIKELRKMVTKCPNNSGQSWQRFYQLTKLLDSMHDLVNDLLEFCFYTFRESQALKVEFPAMLVEIISDQLPKVESGNAKPLYFHRK.

The modulating stretch occupies residues 1 to 601 (METKGYHSLP…STGSSRPSKI (601 aa)). Polar residues predominate over residues 230 to 242 (QGTPLTCSPNVEN). Disordered regions lie at residues 230–328 (QGTP…AAST) and 345–375 (SGTS…PFPK). 5 positions are modified to phosphoserine: Ser-249, Ser-258, Ser-282, Ser-286, and Ser-298. Residues 258–299 (SPLSSPLSSMKSSISSPPSHCSVKSPVSSPNNVTPRSSVSSP) show a composition bias toward low complexity. Residues 300–328 (ANINNSRCSVSSPSNTNNRSTLSSPAAST) show a composition bias toward polar residues. Residues 345 to 354 (SGTSAGSSTS) show a composition bias toward low complexity. Residues Cys-602, Cys-605, Cys-619, Cys-622, Cys-638, Cys-644, Cys-654, and Cys-657 each coordinate Zn(2+). 2 consecutive NR C4-type zinc fingers follow at residues 602–622 (CLVC…CGSC) and 638–662 (CAGR…LQKC). The segment at residues 602–667 (CLVCGDEASG…RLQKCLQAGM (66 aa)) is a DNA-binding region (nuclear receptor). Residues 668-723 (NLGARRSKKLGKLKGIHEEQPQQQPPPPPPPPQSPEEGTTYIAPAKEPSVNTALVP) form a hinge region. The tract at residues 682 to 708 (GIHEEQPQQQPPPPPPPPQSPEEGTTY) is disordered. Residues 690–701 (QQPPPPPPPPQS) are compositionally biased toward pro residues. The NR LBD domain occupies 724–962 (QLSAISRALT…EFPAMLVEII (239 aa)). 2 residues coordinate 21-hydroxyprogesterone: Asn-768 and Gln-774. Asn-768 and Gln-774 together coordinate aldosterone. Residues Asn-768 and Gln-774 each contribute to the progesterone site. The important for coactivator binding stretch occupies residues 780–783 (KWAK). 21-hydroxyprogesterone contacts are provided by Arg-815 and Thr-943. Aldosterone is bound by residues Arg-815 and Thr-943. Progesterone is bound by residues Arg-815 and Thr-943.

The protein belongs to the nuclear hormone receptor family. NR3 subfamily. In terms of processing, phosphorylated. As to expression, expressed in hippocampus, being restricted to the more superficial cortical layers.

The protein localises to the cytoplasm. Its subcellular location is the nucleus. In terms of biological role, receptor for both mineralocorticoids (MC) such as aldosterone and glucocorticoids (GC) such as corticosterone or cortisol. Binds to mineralocorticoid response elements (MRE) and transactivates target genes. The effect of MC is to increase ion and water transport and thus raise extracellular fluid volume and blood pressure and lower potassium levels. The protein is Mineralocorticoid receptor (NR3C2) of Saimiri sciureus (Common squirrel monkey).